The following is a 445-amino-acid chain: Ribosomal protein uS12 methylthiotransferase RimO (445 aa).

The region spanning 10 to 120 (PKVGFVSLGC…VVNAVHEVVP (111 aa)) is the MTTase N-terminal domain. Residues Cys19, Cys55, Cys84, Cys153, Cys157, and Cys160 each contribute to the [4Fe-4S] cluster site. Positions 139–378 (LTPRHYAYLK…AHQQAISSAR (240 aa)) constitute a Radical SAM core domain. Residues 380-445 (QLRIGREIEV…DEYDLWAEQI (66 aa)) enclose the TRAM domain.

The protein belongs to the methylthiotransferase family. RimO subfamily. [4Fe-4S] cluster is required as a cofactor.

The protein localises to the cytoplasm. The catalysed reaction is L-aspartate(89)-[ribosomal protein uS12]-hydrogen + (sulfur carrier)-SH + AH2 + 2 S-adenosyl-L-methionine = 3-methylsulfanyl-L-aspartate(89)-[ribosomal protein uS12]-hydrogen + (sulfur carrier)-H + 5'-deoxyadenosine + L-methionine + A + S-adenosyl-L-homocysteine + 2 H(+). Functionally, catalyzes the methylthiolation of an aspartic acid residue of ribosomal protein uS12. This Pseudomonas fluorescens (strain Pf0-1) protein is Ribosomal protein uS12 methylthiotransferase RimO.